A 205-amino-acid polypeptide reads, in one-letter code: Urease accessory protein UreG 1 (205 aa).

14-21 is a GTP binding site; it reads GPVGSGKT.

Belongs to the SIMIBI class G3E GTPase family. UreG subfamily. Homodimer. UreD, UreF and UreG form a complex that acts as a GTP-hydrolysis-dependent molecular chaperone, activating the urease apoprotein by helping to assemble the nickel containing metallocenter of UreC. The UreE protein probably delivers the nickel.

Its subcellular location is the cytoplasm. In terms of biological role, facilitates the functional incorporation of the urease nickel metallocenter. This process requires GTP hydrolysis, probably effectuated by UreG. This chain is Urease accessory protein UreG 1, found in Methylobacterium radiotolerans (strain ATCC 27329 / DSM 1819 / JCM 2831 / NBRC 15690 / NCIMB 10815 / 0-1).